The chain runs to 367 residues: MFIDNVELTVHSGKGGQGAVSFRREKFVPKGGPDGGDGGDGGNVYFLVDKNTHTLSHFKGKKVLKAQNGRPGEGRRKHGKKGEDLILIVPPGTQVYDAQSGELIFDLVEDGQKVLFLQGGKGGKGNWHFKSASNQRPTYAQPGLPGKVVQIRLELKLIADVGLVGFPNVGKSTLISTISNAKPEVANYEFTTLTPKLGVVRVSEFESFVMADIPGIIGGASEGKGLGLQFLKHIERTKSLLYMIDMSSYRDPLTQYKTLQKELKNFSEELAKRSFAIALTKIDALQEDEAKEKIEKFIEDLHLNRGGDNRYGLEERYPYFIQDIYAYDSSKPFFVVSISAVARINIDALKYALYDLVKKERSEANSD.

An Obg domain is found at 1–158 (MFIDNVELTV…VQIRLELKLI (158 aa)). Residues 159-358 (ADVGLVGFPN…LKYALYDLVK (200 aa)) enclose the OBG-type G domain. GTP is bound by residues 165-172 (GFPNVGKS), 190-194 (FTTLT), 212-215 (DIPG), 280-283 (TKID), and 339-341 (SAV). Mg(2+)-binding residues include serine 172 and threonine 192.

Belongs to the TRAFAC class OBG-HflX-like GTPase superfamily. OBG GTPase family. In terms of assembly, monomer. Mg(2+) is required as a cofactor.

Its subcellular location is the cytoplasm. An essential GTPase which binds GTP, GDP and possibly (p)ppGpp with moderate affinity, with high nucleotide exchange rates and a fairly low GTP hydrolysis rate. Plays a role in control of the cell cycle, stress response, ribosome biogenesis and in those bacteria that undergo differentiation, in morphogenesis control. This chain is GTPase Obg, found in Nitratiruptor sp. (strain SB155-2).